The chain runs to 454 residues: tRNA modification GTPase MnmE (454 aa).

Residues R23, E80, and K120 each contribute to the (6S)-5-formyl-5,6,7,8-tetrahydrofolate site. Residues 216 to 377 form the TrmE-type G domain; that stretch reads GMKVVIAGRP…LRNHLKQSMG (162 aa). N226 contacts K(+). Residues 226–231, 245–251, 270–273, 335–338, and 358–360 contribute to the GTP site; these read NAGKSS, TDIAGTT, DTAG, NKAD, and SAR. S230 contributes to the Mg(2+) binding site. 3 residues coordinate K(+): T245, I247, and T250. Residue T251 coordinates Mg(2+). K454 contacts (6S)-5-formyl-5,6,7,8-tetrahydrofolate.

The protein belongs to the TRAFAC class TrmE-Era-EngA-EngB-Septin-like GTPase superfamily. TrmE GTPase family. In terms of assembly, homodimer. Heterotetramer of two MnmE and two MnmG subunits. It depends on K(+) as a cofactor.

The protein resides in the cytoplasm. Its function is as follows. Exhibits a very high intrinsic GTPase hydrolysis rate. Involved in the addition of a carboxymethylaminomethyl (cmnm) group at the wobble position (U34) of certain tRNAs, forming tRNA-cmnm(5)s(2)U34. The protein is tRNA modification GTPase MnmE of Yersinia enterocolitica serotype O:8 / biotype 1B (strain NCTC 13174 / 8081).